The sequence spans 341 residues: Twinfilin-2 (341 aa).

ADF-H domains are found at residues 1 to 131 (ATEE…KHLS) and 169 to 305 (GLAF…DEVH). Lys6 carries the post-translational modification N6-acetyllysine. A Phosphotyrosine modification is found at Tyr301. The interval 314-341 (AFAKPKGPGGKRGHKRLIRGPGENGDDS) is disordered. The span at 322-331 (GGKRGHKRLI) shows a compositional bias: basic residues. Ser341 bears the Phosphoserine mark.

Belongs to the actin-binding proteins ADF family. Twinfilin subfamily. As to quaternary structure, interacts with G-actin; ADP-actin form and capping protein (CP). May also be able to interact with TWF1 and phosphoinositides, PI(4,5)P2. When bound to PI(4,5)P2, it is down-regulated. Interacts with MYO7A. Post-translationally, phosphorylated on both serine and threonine residues.

It is found in the cytoplasm. It localises to the cytoskeleton. The protein resides in the perinuclear region. The protein localises to the cell projection. Its subcellular location is the stereocilium. Functionally, actin-binding protein involved in motile and morphological processes. Inhibits actin polymerization, likely by sequestering G-actin. By capping the barbed ends of filaments, it also regulates motility. Seems to play an important role in clathrin-mediated endocytosis and distribution of endocytic organelles. May play a role in regulating the mature length of the middle and short rows of stereocilia. The chain is Twinfilin-2 (TWF2) from Pongo abelii (Sumatran orangutan).